The sequence spans 446 residues: 3-phosphoshikimate 1-carboxyvinyltransferase (446 aa).

3 residues coordinate 3-phosphoshikimate: Lys30, Ser31, and Arg35. Lys30 lines the phosphoenolpyruvate pocket. Phosphoenolpyruvate contacts are provided by Gly112 and Arg140. Residues Ser186, Ser187, Gln188, Ser215, Glu334, and His361 each contribute to the 3-phosphoshikimate site. Position 188 (Gln188) interacts with phosphoenolpyruvate. Glu334 serves as the catalytic Proton acceptor. Positions 365, 406, and 431 each coordinate phosphoenolpyruvate.

This sequence belongs to the EPSP synthase family. In terms of assembly, monomer.

Its subcellular location is the cytoplasm. It catalyses the reaction 3-phosphoshikimate + phosphoenolpyruvate = 5-O-(1-carboxyvinyl)-3-phosphoshikimate + phosphate. It functions in the pathway metabolic intermediate biosynthesis; chorismate biosynthesis; chorismate from D-erythrose 4-phosphate and phosphoenolpyruvate: step 6/7. In terms of biological role, catalyzes the transfer of the enolpyruvyl moiety of phosphoenolpyruvate (PEP) to the 5-hydroxyl of shikimate-3-phosphate (S3P) to produce enolpyruvyl shikimate-3-phosphate and inorganic phosphate. This Streptomyces avermitilis (strain ATCC 31267 / DSM 46492 / JCM 5070 / NBRC 14893 / NCIMB 12804 / NRRL 8165 / MA-4680) protein is 3-phosphoshikimate 1-carboxyvinyltransferase.